The primary structure comprises 509 residues: ATP synthase subunit alpha (509 aa).

169 to 176 provides a ligand contact to ATP; it reads GDRQTGKT.

The protein belongs to the ATPase alpha/beta chains family. In terms of assembly, F-type ATPases have 2 components, CF(1) - the catalytic core - and CF(0) - the membrane proton channel. CF(1) has five subunits: alpha(3), beta(3), gamma(1), delta(1), epsilon(1). CF(0) has three main subunits: a(1), b(2) and c(9-12). The alpha and beta chains form an alternating ring which encloses part of the gamma chain. CF(1) is attached to CF(0) by a central stalk formed by the gamma and epsilon chains, while a peripheral stalk is formed by the delta and b chains.

Its subcellular location is the cell inner membrane. The catalysed reaction is ATP + H2O + 4 H(+)(in) = ADP + phosphate + 5 H(+)(out). Produces ATP from ADP in the presence of a proton gradient across the membrane. The alpha chain is a regulatory subunit. The polypeptide is ATP synthase subunit alpha (Methylorubrum populi (strain ATCC BAA-705 / NCIMB 13946 / BJ001) (Methylobacterium populi)).